We begin with the raw amino-acid sequence, 500 residues long: UDP-N-acetylmuramoyl-L-alanyl-D-glutamate--2,6-diaminopimelate ligase (500 aa).

S38 provides a ligand contact to UDP-N-acetyl-alpha-D-muramoyl-L-alanyl-D-glutamate. 118–124 (GTNGKTS) is a binding site for ATP. Residues 160–161 (TT), S187, and R195 contribute to the UDP-N-acetyl-alpha-D-muramoyl-L-alanyl-D-glutamate site. The residue at position 227 (K227) is an N6-carboxylysine. Residues R395, 419–422 (DNPR), G471, and E475 contribute to the meso-2,6-diaminopimelate site. Residues 419 to 422 (DNPR) carry the Meso-diaminopimelate recognition motif motif.

This sequence belongs to the MurCDEF family. MurE subfamily. The cofactor is Mg(2+). In terms of processing, carboxylation is probably crucial for Mg(2+) binding and, consequently, for the gamma-phosphate positioning of ATP.

It localises to the cytoplasm. It catalyses the reaction UDP-N-acetyl-alpha-D-muramoyl-L-alanyl-D-glutamate + meso-2,6-diaminopimelate + ATP = UDP-N-acetyl-alpha-D-muramoyl-L-alanyl-gamma-D-glutamyl-meso-2,6-diaminopimelate + ADP + phosphate + H(+). The protein operates within cell wall biogenesis; peptidoglycan biosynthesis. Catalyzes the addition of meso-diaminopimelic acid to the nucleotide precursor UDP-N-acetylmuramoyl-L-alanyl-D-glutamate (UMAG) in the biosynthesis of bacterial cell-wall peptidoglycan. The protein is UDP-N-acetylmuramoyl-L-alanyl-D-glutamate--2,6-diaminopimelate ligase of Leptospira borgpetersenii serovar Hardjo-bovis (strain L550).